Consider the following 296-residue polypeptide: Aspartate and glycine-rich protein (296 aa).

Gly residues predominate over residues 1–77 (GDGENGNGNG…GNGNGNGNGN (77 aa)). Disordered stretches follow at residues 1–219 (GDGE…DNGG) and 233–296 (RARA…YTSY). 2 stretches are compositionally biased toward acidic residues: residues 80–96 (FDDD…DDWN) and 103–194 (NGDD…DDRW). Residues 198 to 210 (NGNGNGNGNGNGN) show a composition bias toward gly residues. Positions 233–243 (RARAAASAAGR) are enriched in low complexity. Gly residues predominate over residues 244–259 (SRGGSGGSGGSGGSGG). Residues 270 to 281 (RAFASARASSGN) are compositionally biased toward low complexity.

In terms of tissue distribution, component of the acid-soluble and acid-insoluble organic matrix of calcified shell layers (at protein level).

Its subcellular location is the secreted. In Haliotis asinina (Donkey's ear abalone), this protein is Aspartate and glycine-rich protein.